A 337-amino-acid chain; its full sequence is tRNA N6-adenosine threonylcarbamoyltransferase (337 aa).

The Fe cation site is built by His111 and His115. Substrate is bound by residues 134–138 (LVSGG), Asp167, Gly180, and Asn272. Asp300 contacts Fe cation.

The protein belongs to the KAE1 / TsaD family. Fe(2+) is required as a cofactor.

The protein resides in the cytoplasm. The enzyme catalyses L-threonylcarbamoyladenylate + adenosine(37) in tRNA = N(6)-L-threonylcarbamoyladenosine(37) in tRNA + AMP + H(+). Required for the formation of a threonylcarbamoyl group on adenosine at position 37 (t(6)A37) in tRNAs that read codons beginning with adenine. Is involved in the transfer of the threonylcarbamoyl moiety of threonylcarbamoyl-AMP (TC-AMP) to the N6 group of A37, together with TsaE and TsaB. TsaD likely plays a direct catalytic role in this reaction. This chain is tRNA N6-adenosine threonylcarbamoyltransferase, found in Salmonella newport (strain SL254).